A 128-amino-acid polypeptide reads, in one-letter code: Glycine cleavage system H protein (128 aa).

One can recognise a Lipoyl-binding domain in the interval 24-106 (LVRIGISEFA…HGEGWLLIIR (83 aa)). K65 is modified (N6-lipoyllysine).

Belongs to the GcvH family. As to quaternary structure, the glycine cleavage system is composed of four proteins: P, T, L and H. It depends on (R)-lipoate as a cofactor.

In terms of biological role, the glycine cleavage system catalyzes the degradation of glycine. The H protein shuttles the methylamine group of glycine from the P protein to the T protein. This Prochlorococcus marinus (strain NATL2A) protein is Glycine cleavage system H protein.